Reading from the N-terminus, the 657-residue chain is Probable potassium transport system protein Kup (657 aa).

Residues 1–25 (MGSGPADEEHTVDTEPGVSPPRRTV) form a disordered region. Transmembrane regions (helical) follow at residues 35–55 (VVVGALGVVFGDIGTSPIYTI), 77–97 (VVSLIFWSVMLIVTATYVLLV), 127–147 (TAVLAGLGIFGAALFFGDSMI), 165–185 (PGLEEWIVPITAVIIVALFSV), 196–216 (LFGPVMIVWFVSIGACGVSGI), 234–254 (FFFGHFGIAFFALAAVVLAVT), 275–295 (WLVLVLPACVLSYLGQGALLL), 315–335 (WPMVLLATAATVIASQAVITG), 365–385 (IYVPWINWVLMVSVLTLVFAF), 394–414 (AFGMAVTGTITITTLLFFYIV), 422–442 (LWLVVCGAGCLLAVDLLFLAA), and 447–467 (LVHGAWLPLLIALTAFTVMTT).

This sequence belongs to the HAK/KUP transporter (TC 2.A.72) family.

The protein resides in the cell membrane. The catalysed reaction is K(+)(in) + H(+)(in) = K(+)(out) + H(+)(out). Its function is as follows. Transport of potassium into the cell. Likely operates as a K(+):H(+) symporter. In Rhodococcus jostii (strain RHA1), this protein is Probable potassium transport system protein Kup.